The following is a 215-amino-acid chain: Histidine biosynthesis bifunctional protein HisIE (215 aa).

Positions 1-114 (MLKKHDLLNL…FISNKYNINF (114 aa)) are phosphoribosyl-AMP cyclohydrolase. The segment at 115–215 (LFKLEEIIEE…LNTNSEKLLK (101 aa)) is phosphoribosyl-ATP pyrophosphohydrolase.

In the N-terminal section; belongs to the PRA-CH family. This sequence in the C-terminal section; belongs to the PRA-PH family.

The protein localises to the cytoplasm. The enzyme catalyses 1-(5-phospho-beta-D-ribosyl)-ATP + H2O = 1-(5-phospho-beta-D-ribosyl)-5'-AMP + diphosphate + H(+). It carries out the reaction 1-(5-phospho-beta-D-ribosyl)-5'-AMP + H2O = 1-(5-phospho-beta-D-ribosyl)-5-[(5-phospho-beta-D-ribosylamino)methylideneamino]imidazole-4-carboxamide. It participates in amino-acid biosynthesis; L-histidine biosynthesis; L-histidine from 5-phospho-alpha-D-ribose 1-diphosphate: step 2/9. The protein operates within amino-acid biosynthesis; L-histidine biosynthesis; L-histidine from 5-phospho-alpha-D-ribose 1-diphosphate: step 3/9. This chain is Histidine biosynthesis bifunctional protein HisIE (hisI), found in Buchnera aphidicola subsp. Acyrthosiphon pisum (strain APS) (Acyrthosiphon pisum symbiotic bacterium).